Consider the following 273-residue polypeptide: Thioredoxin-like 1-3, chloroplastic (273 aa).

The N-terminal 44 residues, 1–44 (MATDSFIKLNPISFNRARFDLRDFAGISPKSISSLCCISPRLIS), are a transit peptide targeting the chloroplast. The region spanning 62–202 (LFSKKKIPAF…FKEALEKHGR (141 aa)) is the Thioredoxin domain. Residues Cys125 and Cys128 each act as nucleophile in the active site. Cys125 and Cys128 are disulfide-bonded.

This sequence belongs to the thioredoxin family.

It is found in the plastid. It localises to the chloroplast. In terms of biological role, probable thiol-disulfide oxidoreductase that may participate in various redox reactions. This Arabidopsis thaliana (Mouse-ear cress) protein is Thioredoxin-like 1-3, chloroplastic.